The primary structure comprises 130 residues: Small ribosomal subunit protein uS8 (130 aa).

Belongs to the universal ribosomal protein uS8 family. Part of the 30S ribosomal subunit.

One of the primary rRNA binding proteins, it binds directly to 16S rRNA central domain where it helps coordinate assembly of the platform of the 30S subunit. The polypeptide is Small ribosomal subunit protein uS8 (Methanococcus maripaludis (strain C6 / ATCC BAA-1332)).